Reading from the N-terminus, the 420-residue chain is F-box protein At5g07610 (420 aa).

The segment at 1-25 (MSSCSRTRTKAPRSARSRRNGGFSS) is disordered. Over residues 7–19 (TRTKAPRSARSRR) the composition is skewed to basic residues. The 51-residue stretch at 27–77 (SATIVADIDDVLIQILSFLPIKTLLRFKRVSKRWLSLITNPVFSNRVIKSN) folds into the F-box domain.

This chain is F-box protein At5g07610, found in Arabidopsis thaliana (Mouse-ear cress).